The chain runs to 152 residues: Ubiquitin-conjugating enzyme E2 2 (152 aa).

In terms of domain architecture, UBC core spans 4–150 (PARKRLMRDF…VREVVEQSWT (147 aa)). Cys-88 functions as the Glycyl thioester intermediate in the catalytic mechanism.

It belongs to the ubiquitin-conjugating enzyme family.

It carries out the reaction S-ubiquitinyl-[E1 ubiquitin-activating enzyme]-L-cysteine + [E2 ubiquitin-conjugating enzyme]-L-cysteine = [E1 ubiquitin-activating enzyme]-L-cysteine + S-ubiquitinyl-[E2 ubiquitin-conjugating enzyme]-L-cysteine.. It functions in the pathway protein modification; protein ubiquitination. Its function is as follows. Catalyzes the covalent attachment of ubiquitin to other proteins. This is Ubiquitin-conjugating enzyme E2 2 (UBC2) from Triticum aestivum (Wheat).